The sequence spans 258 residues: Snake venom serine protease 3 (258 aa).

Residues M1–A18 form the signal peptide. The propeptide occupies Q19–L24. The region spanning I25–A249 is the Peptidase S1 domain. 6 disulfide bridges follow: C31–C163, C50–C66, C98–C256, C142–C210, C174–C189, and C200–C225. N44 carries an N-linked (GlcNAc...) asparagine glycan. Active-site charge relay system residues include H65 and D110. The active-site Charge relay system is S204. An N-linked (GlcNAc...) asparagine glycan is attached at N239.

Belongs to the peptidase S1 family. Snake venom subfamily. In terms of assembly, monomer. Expressed by the venom gland.

It is found in the secreted. Snake venom serine protease that may act in the hemostasis system of the prey. The protein is Snake venom serine protease 3 of Protobothrops jerdonii (Jerdon's pitviper).